The chain runs to 499 residues: Cytochrome P450 77A1 (499 aa).

Cys-443 contributes to the heme binding site.

It belongs to the cytochrome P450 family. The cofactor is heme.

The polypeptide is Cytochrome P450 77A1 (CYP77A1) (Solanum melongena (Eggplant)).